The primary structure comprises 639 residues: Chaperone protein HtpG (639 aa).

Positions 1–347 (MSQQETHGFQ…SNDLPLNVSR (347 aa)) are a; substrate-binding. The interval 348 to 564 (EILQDNKVTT…EGEMSTQMIK (217 aa)) is b. Positions 565 to 639 (LMQAAGQDVP…MNQMLLASVK (75 aa)) are c.

It belongs to the heat shock protein 90 family. As to quaternary structure, homodimer.

The protein localises to the cytoplasm. Its function is as follows. Molecular chaperone. Has ATPase activity. This chain is Chaperone protein HtpG, found in Shewanella halifaxensis (strain HAW-EB4).